We begin with the raw amino-acid sequence, 457 residues long: Argininosuccinate lyase (457 aa).

The protein belongs to the lyase 1 family. Argininosuccinate lyase subfamily.

The protein localises to the cytoplasm. The catalysed reaction is 2-(N(omega)-L-arginino)succinate = fumarate + L-arginine. It participates in amino-acid biosynthesis; L-arginine biosynthesis; L-arginine from L-ornithine and carbamoyl phosphate: step 3/3. The protein is Argininosuccinate lyase of Shigella boydii serotype 18 (strain CDC 3083-94 / BS512).